Reading from the N-terminus, the 237-residue chain is Urease accessory protein UreF (237 aa).

The protein belongs to the UreF family. UreD, UreF and UreG form a complex that acts as a GTP-hydrolysis-dependent molecular chaperone, activating the urease apoprotein by helping to assemble the nickel containing metallocenter of UreC. The UreE protein probably delivers the nickel.

The protein resides in the cytoplasm. In terms of biological role, required for maturation of urease via the functional incorporation of the urease nickel metallocenter. This Streptococcus salivarius (strain 57.I) protein is Urease accessory protein UreF.